Reading from the N-terminus, the 591-residue chain is Dolichyl-phosphooligosaccharide-protein glycotransferase 1 (591 aa).

The Cytoplasmic segment spans residues Met-1–Val-5. A helical membrane pass occupies residues Leu-6–Phe-26. The Extracellular segment spans residues Asp-27–Lys-67. The DXD motif 1 motif lies at Gly-34–Asp-36. Asp-36 provides a ligand contact to Mn(2+). Residues Ile-68 to His-88 traverse the membrane as a helical segment. At Ser-89–Glu-91 the chain is on the cytoplasmic side. A helical transmembrane segment spans residues Ile-92 to Thr-112. The Extracellular portion of the chain corresponds to Ala-113–Thr-121. A helical membrane pass occupies residues Phe-122–Leu-142. Residues Gly-143–His-147 are Cytoplasmic-facing. Asp-146 is a Mn(2+) binding site. The short motif at Asp-146–His-148 is the DXD motif 2 element. His-147 contacts a glycophospholipid. His-148 contacts Mn(2+). The chain crosses the membrane as a helical span at residues His-148–Trp-168. Position 169 (Lys-169) is a topological domain, extracellular. A helical membrane pass occupies residues Ile-170–Gly-190. Residues Ala-191–Ser-219 lie on the Cytoplasmic side of the membrane. A helical membrane pass occupies residues Phe-220 to Gly-240. Residues Ser-241–Asn-252 lie on the Extracellular side of the membrane. Residues Ala-253–Leu-273 form a helical membrane-spanning segment. Residues Pro-274–His-275 are Cytoplasmic-facing. Residues Phe-276–Ile-296 traverse the membrane as a helical segment. The short motif at Thr-295–Glu-298 is the TIXE motif element. Residues Ser-297 to Gln-303 lie on the Extracellular side of the membrane. Residues Ile-304–Leu-324 traverse the membrane as a helical segment. Residues Phe-325–Arg-327 lie on the Cytoplasmic side of the membrane. A helical membrane pass occupies residues Asn-328–Met-344. Residues Gln-345–Arg-347 lie on the Extracellular side of the membrane. Residue Arg-347 participates in a glycophospholipid binding. Residues Phe-348–Leu-368 traverse the membrane as a helical segment. Topologically, residues Glu-369–Ala-408 are cytoplasmic. The helical transmembrane segment at Val-409–Phe-429 threads the bilayer. Topologically, residues Asp-430–Ser-591 are extracellular. Residues Trp-465–Asp-467 form an interacts with target acceptor peptide in protein substrate region. The WWDYG motif motif lies at Trp-465–Gly-469. The DKi motif motif lies at Glu-521–Ile-535.

It belongs to the STT3 family. Requires Mn(2+) as cofactor. Mg(2+) is required as a cofactor. It depends on Zn(2+) as a cofactor.

It localises to the cell membrane. It carries out the reaction an archaeal dolichyl phosphooligosaccharide + [protein]-L-asparagine = an archaeal dolichyl phosphate + a glycoprotein with the oligosaccharide chain attached by N-beta-D-glycosyl linkage to a protein L-asparagine.. It functions in the pathway protein modification; protein glycosylation. Functionally, oligosaccharyl transferase (OST) that catalyzes the initial transfer of a defined glycan (a GalNAc-linked heptasaccharide composed of 4 Hex, 3 dHex and a sulfate for A.fulgidus AglB-S) from the lipid carrier dolichol-monophosphate to an asparagine residue within an Asn-X-Ser/Thr consensus motif in nascent polypeptide chains, the first step in protein N-glycosylation. In Archaeoglobus fulgidus (strain ATCC 49558 / DSM 4304 / JCM 9628 / NBRC 100126 / VC-16), this protein is Dolichyl-phosphooligosaccharide-protein glycotransferase 1 (aglB1).